A 79-amino-acid chain; its full sequence is MKVKAVASQIPVTPRKVCLVVDLIRGQKIKEAEAILTLNSKSAAPIVLKLLKSAVANAVNNFNLNKDDLYVEEIFVNES.

The protein belongs to the universal ribosomal protein uL22 family. In terms of assembly, part of the 50S ribosomal subunit.

Functionally, this protein binds specifically to 23S rRNA; its binding is stimulated by other ribosomal proteins, e.g. L4, L17, and L20. It is important during the early stages of 50S assembly. It makes multiple contacts with different domains of the 23S rRNA in the assembled 50S subunit and ribosome. In terms of biological role, the globular domain of the protein is located near the polypeptide exit tunnel on the outside of the subunit, while an extended beta-hairpin is found that lines the wall of the exit tunnel in the center of the 70S ribosome. This chain is Large ribosomal subunit protein uL22 (rplV), found in Clover proliferation phytoplasma.